We begin with the raw amino-acid sequence, 140 residues long: Con-Ins Im2 (140 aa).

Residues M1–G29 form the signal peptide. Intrachain disulfides connect C35/C123, C50/C126, C62/C139, and C125/C130. Residues P64 to R110 constitute a propeptide, c peptide. At E134 the chain carries 4-carboxyglutamate; partial.

The protein belongs to the insulin family. As to quaternary structure, heterodimer of A and B chains; disulfide-linked. In terms of tissue distribution, expressed by the venom gland.

The protein resides in the secreted. Functionally, this venom insulin facilitates prey capture by rapidly inducing hypoglycemic shock. Intraperitoneal injection of this peptide into zebrafish lowers blood glucose with the same potency than human insulin. In vivo, when applied to water, this peptide reduces overall locomotor activity of zebrafish larvae, observed as a significant decrease in the percentage of time spent swimming and movement frequency. This Conus imperialis (Imperial cone) protein is Con-Ins Im2.